The chain runs to 246 residues: 1-(5-phosphoribosyl)-5-[(5-phosphoribosylamino)methylideneamino] imidazole-4-carboxamide isomerase (246 aa).

The active-site Proton acceptor is D8. Catalysis depends on D131, which acts as the Proton donor.

Belongs to the HisA/HisF family.

It is found in the cytoplasm. It catalyses the reaction 1-(5-phospho-beta-D-ribosyl)-5-[(5-phospho-beta-D-ribosylamino)methylideneamino]imidazole-4-carboxamide = 5-[(5-phospho-1-deoxy-D-ribulos-1-ylimino)methylamino]-1-(5-phospho-beta-D-ribosyl)imidazole-4-carboxamide. The protein operates within amino-acid biosynthesis; L-histidine biosynthesis; L-histidine from 5-phospho-alpha-D-ribose 1-diphosphate: step 4/9. The protein is 1-(5-phosphoribosyl)-5-[(5-phosphoribosylamino)methylideneamino] imidazole-4-carboxamide isomerase of Delftia acidovorans (strain DSM 14801 / SPH-1).